The primary structure comprises 108 residues: Movement protein TGB2 (108 aa).

The Cytoplasmic portion of the chain corresponds to 1–8 (MPLTPPPN). Residues 9–29 (YTGLYIAAALGVSLAAVVALF) form a helical membrane-spanning segment. At 30-72 (TRSTLPIVGDSQHNLPHGGRYRDGTKAIDYFKPTKLNSVEPGN) the chain is on the lumenal side. Residues 73 to 93 (YWYTQPWLLVILLVALICLSG) traverse the membrane as a helical segment. The Cytoplasmic portion of the chain corresponds to 94–108 (RHAQCCPRCNRVHSA).

It belongs to the Tymovirales TGBp2 protein family.

It localises to the host endoplasmic reticulum membrane. Plays a role in viral cell-to-cell propagation, by facilitating genome transport to neighboring plant cells through plasmosdesmata,. The protein is Movement protein TGB2 of Solanum tuberosum (Potato).